A 465-amino-acid polypeptide reads, in one-letter code: Glutamate--tRNA ligase (465 aa).

Residues 8–18 (PSPTGDLHIGG) carry the 'HIGH' region motif. The 'KMSKS' region signature appears at 235–239 (RLSKR). ATP is bound at residue Lys238.

The protein belongs to the class-I aminoacyl-tRNA synthetase family. Glutamate--tRNA ligase type 1 subfamily. Monomer.

Its subcellular location is the cytoplasm. It catalyses the reaction tRNA(Glu) + L-glutamate + ATP = L-glutamyl-tRNA(Glu) + AMP + diphosphate. Catalyzes the attachment of glutamate to tRNA(Glu) in a two-step reaction: glutamate is first activated by ATP to form Glu-AMP and then transferred to the acceptor end of tRNA(Glu). In Dichelobacter nodosus (strain VCS1703A), this protein is Glutamate--tRNA ligase.